A 500-amino-acid polypeptide reads, in one-letter code: Glutamate--tRNA ligase (500 aa).

The short motif at 13–23 is the 'HIGH' region element; sequence PSPTGTPHVGM. The 'KMSKS' region motif lies at 258 to 262; the sequence is KLSKR. Lys261 contacts ATP.

It belongs to the class-I aminoacyl-tRNA synthetase family. Glutamate--tRNA ligase type 1 subfamily. In terms of assembly, monomer.

Its subcellular location is the cytoplasm. It catalyses the reaction tRNA(Glu) + L-glutamate + ATP = L-glutamyl-tRNA(Glu) + AMP + diphosphate. Functionally, catalyzes the attachment of glutamate to tRNA(Glu) in a two-step reaction: glutamate is first activated by ATP to form Glu-AMP and then transferred to the acceptor end of tRNA(Glu). In Corynebacterium jeikeium (strain K411), this protein is Glutamate--tRNA ligase.